We begin with the raw amino-acid sequence, 143 residues long: Nitrosuccinic acid decarboxylase npaB (143 aa).

This sequence belongs to the carboxymuconolactone decarboxylase family. Mg(2+) serves as cofactor.

It participates in mycotoxin biosynthesis. Its function is as follows. Nitrosuccinic acid decarboxylase; part of the gene cluster that mediates the biosynthesis of the deadly neurotoxic nitroalkane 3-nitropropanoic acid (3-NPA) that acts as an antimetabolite of succinate and irreversibly inhibits succinate dehydrogenase and disrupts mitochondrial oxidative phosphorylation. NpaB facilitates decarboxylation of nitrosuccinic acid produced by the nitrosuccinic acid synthase npaA to yield the final product of the cluster, the lethal mycotoxin 3-NPA. This is Nitrosuccinic acid decarboxylase npaB from Metarhizium robertsii (strain ARSEF 23 / ATCC MYA-3075) (Metarhizium anisopliae (strain ARSEF 23)).